A 106-amino-acid chain; its full sequence is MAQAFVNSKIQPGKVVVFIKPTCPFCRKTQELLSQLPFKEGLLEFVDITATSDTNEIQDYLQQLTGARTVPRVFIGKECIGGCTDLESMHKRGELLTRLQQIGALK.

N-acetylalanine is present on Ala2. Positions 3–106 constitute a Glutaredoxin domain; that stretch reads QAFVNSKIQP…TRLQQIGALK (104 aa). Lys9 carries the post-translational modification N6-succinyllysine. 2 cysteine pairs are disulfide-bonded: Cys23-Cys26 and Cys79-Cys83.

Belongs to the glutaredoxin family.

The protein resides in the cytoplasm. Its function is as follows. Has a glutathione-disulfide oxidoreductase activity in the presence of NADPH and glutathione reductase. Reduces low molecular weight disulfides and proteins. The chain is Glutaredoxin-1 (GLRX) from Sus scrofa (Pig).